The following is a 306-amino-acid chain: Ribosomal protein L11 methyltransferase (306 aa).

T152, G179, D201, and N243 together coordinate S-adenosyl-L-methionine.

The protein belongs to the methyltransferase superfamily. PrmA family.

The protein localises to the cytoplasm. The catalysed reaction is L-lysyl-[protein] + 3 S-adenosyl-L-methionine = N(6),N(6),N(6)-trimethyl-L-lysyl-[protein] + 3 S-adenosyl-L-homocysteine + 3 H(+). Its function is as follows. Methylates ribosomal protein L11. In Citrifermentans bemidjiense (strain ATCC BAA-1014 / DSM 16622 / JCM 12645 / Bem) (Geobacter bemidjiensis), this protein is Ribosomal protein L11 methyltransferase.